Reading from the N-terminus, the 99-residue chain is Evasin P1162 (99 aa).

An N-terminal signal peptide occupies residues 1 to 28 (MEVKTFAFLQIAVCIAIGIELICAGTNA). 3 disulfides stabilise this stretch: cysteine 40–cysteine 59, cysteine 44–cysteine 61, and cysteine 55–cysteine 72. N-linked (GlcNAc...) asparagine glycans are attached at residues asparagine 43, asparagine 49, asparagine 58, and asparagine 85.

It is found in the secreted. Its function is as follows. Salivary chemokine-binding protein which binds to host chemokines CXCL1, CXCL2, CXCL3, CXCL5 and CXCL8. The polypeptide is Evasin P1162 (Ixodes ricinus (Common tick)).